The chain runs to 114 residues: Iron-sulfur cluster insertion protein ErpA (114 aa).

Positions 42, 106, and 108 each coordinate iron-sulfur cluster.

The protein belongs to the HesB/IscA family. In terms of assembly, homodimer. Iron-sulfur cluster is required as a cofactor.

Functionally, required for insertion of 4Fe-4S clusters for at least IspG. The chain is Iron-sulfur cluster insertion protein ErpA from Serratia proteamaculans (strain 568).